The chain runs to 498 residues: Cystathionine beta-synthase (498 aa).

Residues 1–25 (MSAPEGPSKCTWTPNTTENTPHTTR) form a disordered region. The segment covering 11–22 (TWTPNTTENTPH) has biased composition (low complexity). K73 carries the post-translational modification N6-(pyridoxal phosphate)lysine. Pyridoxal 5'-phosphate contacts are provided by residues N103, 210–214 (GTGGT), and S302. CBS domains are found at residues 374–430 (TLPK…KKAV) and 435–497 (VSKV…SQQK).

The protein belongs to the cysteine synthase/cystathionine beta-synthase family. Pyridoxal 5'-phosphate is required as a cofactor.

It catalyses the reaction L-homocysteine + L-serine = L,L-cystathionine + H2O. It participates in amino-acid biosynthesis; L-cysteine biosynthesis; L-cysteine from L-homocysteine and L-serine: step 1/2. The chain is Cystathionine beta-synthase (cysB) from Dictyostelium discoideum (Social amoeba).